Reading from the N-terminus, the 157-residue chain is Protein AE7 (157 aa).

Belongs to the MIP18 family. Part of a complex formed of AE7, CIA1, MMS19 and NAR1. Interacts with CIA1 and MMS19, but not with NAR1. Expressed in the embryo, shoot apical meristem, leaf primordia, inflorescence and all floral organs.

The protein resides in the nucleus. Its subcellular location is the cytoplasm. Its function is as follows. Central member of the cytosolic iron-sulfur (Fe-S) protein assembly (CIA) pathway. Involved in leaf polarity formation. Promotes leaf adaxial identity. May play a role in the cell cycle progression and is required for cell proliferation. The sequence is that of Protein AE7 from Arabidopsis thaliana (Mouse-ear cress).